Reading from the N-terminus, the 187-residue chain is Nucleoside-triphosphatase THEP1 (187 aa).

Residues 9–16 (GRPGVGKT) and 100–107 (LIAIDEIG) each bind ATP.

Belongs to the THEP1 NTPase family.

It catalyses the reaction a ribonucleoside 5'-triphosphate + H2O = a ribonucleoside 5'-diphosphate + phosphate + H(+). Its function is as follows. Has nucleotide phosphatase activity towards ATP, GTP, CTP, TTP and UTP. May hydrolyze nucleoside diphosphates with lower efficiency. The polypeptide is Nucleoside-triphosphatase THEP1 (Hyperthermus butylicus (strain DSM 5456 / JCM 9403 / PLM1-5)).